A 581-amino-acid chain; its full sequence is Putative carboxypeptidase YOL153C (581 aa).

Topologically, residues 1–29 (MTETHHAPLPDVYPSSKQPTSSTYSKCKK) are cytoplasmic. Residue lysine 17 forms a Glycyl lysine isopeptide (Lys-Gly) (interchain with G-Cter in ubiquitin) linkage. Residues 30–46 (FGLPLIGLLTLLLAYIS) traverse the membrane as a helical; Signal-anchor for type II membrane protein segment. At 47–581 (SFTKPVPNST…IVNVNEYGHD (535 aa)) the chain is on the extracellular side. Residues asparagine 54 and asparagine 76 are each glycosylated (N-linked (GlcNAc...) asparagine). Histidine 170 provides a ligand contact to Zn(2+). Aspartate 172 is an active-site residue. Aspartate 207 contacts Zn(2+). Glutamate 241 serves as the catalytic Proton acceptor. The Zn(2+) site is built by glutamate 242 and aspartate 270. 2 N-linked (GlcNAc...) asparagine glycosylation sites follow: asparagine 335 and asparagine 428. Histidine 550 contacts Zn(2+).

Belongs to the peptidase M20A family. Requires Zn(2+) as cofactor.

It is found in the membrane. The protein is Putative carboxypeptidase YOL153C of Saccharomyces cerevisiae (strain ATCC 204508 / S288c) (Baker's yeast).